Reading from the N-terminus, the 238-residue chain is MTPHINAPAGAFADVVLMPGDPLRAKYIAETFLENAQEVTNIRNMLGYTGTYKGRKISVMGHGMGIPSCSIYAKELITEYGVKKIIRVGSCGAVNMDVKIRDVIIGLGACTDSKVNRIRFKDNDFAAIADFGMAQAAVQAAKNKGIDVKVGNLFSADLFYTPDPEMFDVMEKYGILGVEMEAAGIYGVAAEFKAKALTICTVSDHIRTHEQTSAEERQLTFNEMIEIALESVLLGDSL.

His4 lines the a purine D-ribonucleoside pocket. Phosphate is bound by residues Gly20, Arg24, Arg43, and 87–90 (RVGS). A purine D-ribonucleoside is bound by residues 179–181 (EME) and 203–204 (SD). Asp204 acts as the Proton donor in catalysis.

Belongs to the PNP/UDP phosphorylase family. Homohexamer; trimer of homodimers.

It carries out the reaction a purine D-ribonucleoside + phosphate = a purine nucleobase + alpha-D-ribose 1-phosphate. It catalyses the reaction a purine 2'-deoxy-D-ribonucleoside + phosphate = a purine nucleobase + 2-deoxy-alpha-D-ribose 1-phosphate. In terms of biological role, catalyzes the reversible phosphorolytic breakdown of the N-glycosidic bond in the beta-(deoxy)ribonucleoside molecules, with the formation of the corresponding free purine bases and pentose-1-phosphate. The polypeptide is Purine nucleoside phosphorylase DeoD-type (Histophilus somni (strain 129Pt) (Haemophilus somnus)).